We begin with the raw amino-acid sequence, 119 residues long: Ribonuclease P protein component (119 aa).

Belongs to the RnpA family. As to quaternary structure, consists of a catalytic RNA component (M1 or rnpB) and a protein subunit.

The catalysed reaction is Endonucleolytic cleavage of RNA, removing 5'-extranucleotides from tRNA precursor.. In terms of biological role, RNaseP catalyzes the removal of the 5'-leader sequence from pre-tRNA to produce the mature 5'-terminus. It can also cleave other RNA substrates such as 4.5S RNA. The protein component plays an auxiliary but essential role in vivo by binding to the 5'-leader sequence and broadening the substrate specificity of the ribozyme. This chain is Ribonuclease P protein component, found in Clostridium acetobutylicum (strain ATCC 824 / DSM 792 / JCM 1419 / IAM 19013 / LMG 5710 / NBRC 13948 / NRRL B-527 / VKM B-1787 / 2291 / W).